We begin with the raw amino-acid sequence, 759 residues long: Rho GTPase-activating protein 26 (759 aa).

One can recognise a BAR domain in the interval 7–262; the sequence is EFSDCYLDSP…MKENPHEHLA (256 aa). The region spanning 265 to 369 is the PH domain; that stretch reads PYTMEGYLYV…WMEAMDGREP (105 aa). The Rho-GAP domain maps to 383-568; that stretch reads AQLDNIGFSI…IIIENYEKMF (186 aa). Positions 578 to 701 are disordered; that stretch reads NSQLHLSRKR…STSSDSSPVS (124 aa). A compositionally biased stretch (basic and acidic residues) spans 608-617; it reads HNTEKEEKRN. A compositionally biased stretch (low complexity) spans 618–637; the sequence is SVNSSAESVSSSNANSSANS. Residues 638–650 show a composition bias toward polar residues; sequence TCTQCSNMNNLNA. The span at 679–701 shows a compositional bias: low complexity; the sequence is PMFSAPSSPMPTSSTSSDSSPVS. Positions 701-759 constitute an SH3 domain; that stretch reads SVPRKAKALYACKAEHDSELSFSAGTVFDNVYPSQEPGWLEGILNGKTGLIPENYVEFL.

It is found in the cell junction. The protein resides in the focal adhesion. The protein localises to the cytoplasm. It localises to the cytoskeleton. Its subcellular location is the endosome membrane. In terms of biological role, GTPase-activating protein for rhoa and cdc42. The protein is Rho GTPase-activating protein 26 (arhgap26) of Xenopus tropicalis (Western clawed frog).